A 155-amino-acid polypeptide reads, in one-letter code: Small ribosomal subunit protein uS7cz/uS7cy (155 aa).

It belongs to the universal ribosomal protein uS7 family. In terms of assembly, part of the 30S ribosomal subunit.

The protein localises to the plastid. Its subcellular location is the chloroplast. In terms of biological role, one of the primary rRNA binding proteins, it binds directly to 16S rRNA where it nucleates assembly of the head domain of the 30S subunit. This chain is Small ribosomal subunit protein uS7cz/uS7cy (rps7-A), found in Oenothera argillicola (Appalachian evening primrose).